The primary structure comprises 702 residues: Sodium/hydrogen exchanger 6 (702 aa).

A run of 12 helical transmembrane segments spans residues 72-92 (SANL…IWLF), 104-124 (GLAM…IHVP), 177-197 (VTFD…FYAG), 212-232 (ILAY…SIMY), 253-273 (CLLF…AIFH), 279-299 (VELY…AIVL), 325-345 (IGIF…TGVV), 373-393 (TFLL…FCGI), 415-435 (FELL…LTLF), 437-457 (FQNH…IFLG), 480-500 (NFQH…ALAI), and 516-536 (LLIV…MLSC).

It belongs to the monovalent cation:proton antiporter 1 (CPA1) transporter (TC 2.A.36) family. Homodimer. Interacts with RACK1; regulates the distribution of SLC9A6 between endosomes and the plasma membrane. In terms of processing, ubiquitinated (in vitro). Glycosylated.

The protein localises to the endosome membrane. The protein resides in the recycling endosome membrane. It is found in the early endosome membrane. It localises to the late endosome membrane. Its subcellular location is the cell membrane. It catalyses the reaction Na(+)(in) + H(+)(out) = Na(+)(out) + H(+)(in). The catalysed reaction is K(+)(in) + H(+)(out) = K(+)(out) + H(+)(in). In terms of biological role, endosomal Na(+), K(+)/H(+) antiporter. Mediates the electroneutral exchange of endosomal luminal H(+) for a cytosolic Na(+) or K(+). By facilitating proton efflux, SLC9A6 counteracts the acidity generated by vacuolar (V)-ATPase, thereby limiting luminal acidification. Responsible for alkalizing and maintaining the endosomal pH, and consequently in, e.g., endosome maturation and trafficking of recycling endosomal cargo. Plays a critical role during neurodevelopment by regulating synaptic development and plasticity. Implicated in the maintenance of cell polarity in a manner that is dependent on its ability to modulate intravesicular pH. Regulates intracelular pH in some specialized cells, osteoclasts and stereocilia where this transporter localizes to the plasma membrane. The polypeptide is Sodium/hydrogen exchanger 6 (Slc9a6) (Mus musculus (Mouse)).